A 298-amino-acid chain; its full sequence is Octopine catabolism/uptake operon regulatory protein OccR (298 aa).

Positions 1-58 (MNLRQVEAFRAVMLTGQMTAAAELMLVTQPAISRLIKDFEQATKLQLFERRGNHIIPT) constitute an HTH lysR-type domain. The H-T-H motif DNA-binding region spans 18–37 (MTAAAELMLVTQPAISRLIK).

Belongs to the LysR transcriptional regulatory family.

Positive regulatory protein for the occ operon involved in octopine catabolism and uptake. Also acts as a negative regulator of its expression. The chain is Octopine catabolism/uptake operon regulatory protein OccR (occR) from Agrobacterium tumefaciens (strain Ach5).